Reading from the N-terminus, the 268-residue chain is NH(3)-dependent NAD(+) synthetase (268 aa).

Position 45-52 (45-52 (GLSGGIDS)) interacts with ATP. Asp51 lines the Mg(2+) pocket. Arg129 serves as a coordination point for deamido-NAD(+). Thr149 contributes to the ATP binding site. Residue Glu154 coordinates Mg(2+). Positions 162 and 169 each coordinate deamido-NAD(+). Lys178 and Thr200 together coordinate ATP. 260 to 261 (HK) is a binding site for deamido-NAD(+).

It belongs to the NAD synthetase family. Homodimer.

The catalysed reaction is deamido-NAD(+) + NH4(+) + ATP = AMP + diphosphate + NAD(+) + H(+). It participates in cofactor biosynthesis; NAD(+) biosynthesis; NAD(+) from deamido-NAD(+) (ammonia route): step 1/1. Its function is as follows. Catalyzes the ATP-dependent amidation of deamido-NAD to form NAD. Uses ammonia as a nitrogen source. The chain is NH(3)-dependent NAD(+) synthetase from Halobacterium salinarum (strain ATCC 29341 / DSM 671 / R1).